We begin with the raw amino-acid sequence, 213 residues long: Large ribosomal subunit protein uL1 (213 aa).

The protein belongs to the universal ribosomal protein uL1 family. As to quaternary structure, part of the 50S ribosomal subunit.

Binds directly to 23S rRNA. Probably involved in E site tRNA release. In terms of biological role, protein L1 is also a translational repressor protein, it controls the translation of its operon by binding to its mRNA. The polypeptide is Large ribosomal subunit protein uL1 (Methanococcoides burtonii (strain DSM 6242 / NBRC 107633 / OCM 468 / ACE-M)).